A 143-amino-acid polypeptide reads, in one-letter code: Large ribosomal subunit protein uL15 (143 aa).

The segment at 1 to 56 (MELNSIKPAEGSKHAKRRVGRGIGSGLGKTAGRGHKGQKSRSGGYHKVGFEGGQMP) is disordered. A compositionally biased stretch (gly residues) spans 21–31 (RGIGSGLGKTA).

Belongs to the universal ribosomal protein uL15 family. As to quaternary structure, part of the 50S ribosomal subunit.

Binds to the 23S rRNA. The sequence is that of Large ribosomal subunit protein uL15 from Delftia acidovorans (strain DSM 14801 / SPH-1).